The following is a 547-amino-acid chain: Chaperonin GroEL (547 aa).

Residues 30–33 (TLGP), K51, 87–91 (DGTTT), G415, and D496 each bind ATP.

This sequence belongs to the chaperonin (HSP60) family. In terms of assembly, forms a cylinder of 14 subunits composed of two heptameric rings stacked back-to-back. Interacts with the co-chaperonin GroES.

The protein localises to the cytoplasm. The enzyme catalyses ATP + H2O + a folded polypeptide = ADP + phosphate + an unfolded polypeptide.. Together with its co-chaperonin GroES, plays an essential role in assisting protein folding. The GroEL-GroES system forms a nano-cage that allows encapsulation of the non-native substrate proteins and provides a physical environment optimized to promote and accelerate protein folding. This is Chaperonin GroEL from Histophilus somni (strain 129Pt) (Haemophilus somnus).